Here is a 405-residue protein sequence, read N- to C-terminus: S-arrestin (405 aa).

Thr234 is subject to Phosphothreonine.

This sequence belongs to the arrestin family. In terms of assembly, monomer. Homodimer. Homotetramer. Interacts with RHO (via the phosphorylated C-terminus).

Its subcellular location is the cell projection. It is found in the cilium. It localises to the photoreceptor outer segment. The protein resides in the membrane. In terms of biological role, binds to photoactivated, phosphorylated RHO and terminates RHO signaling via G-proteins by competing with G-proteins for the same binding site on RHO. May play a role in preventing light-dependent degeneration of retinal photoreceptor cells. The chain is S-arrestin (SAG) from Canis lupus familiaris (Dog).